Consider the following 500-residue polypeptide: NAD(P)H-quinone oxidoreductase chain 4, chloroplastic (500 aa).

The next 14 membrane-spanning stretches (helical) occupy residues Phe4 to Leu24, Tyr35 to Phe55, Ile87 to Val107, Leu113 to Ser130, Leu134 to Met154, Phe167 to Leu187, Ile211 to His231, His242 to Val262, Ala272 to Ala292, Ile305 to Asp325, Gly330 to Gly350, Leu386 to Thr406, Ile416 to Met436, and Leu462 to Val482.

The protein belongs to the complex I subunit 4 family.

It is found in the plastid. It localises to the chloroplast thylakoid membrane. The catalysed reaction is a plastoquinone + NADH + (n+1) H(+)(in) = a plastoquinol + NAD(+) + n H(+)(out). It carries out the reaction a plastoquinone + NADPH + (n+1) H(+)(in) = a plastoquinol + NADP(+) + n H(+)(out). The chain is NAD(P)H-quinone oxidoreductase chain 4, chloroplastic from Aethionema cordifolium (Lebanon stonecress).